The following is a 319-amino-acid chain: Protein HEXIM1 (319 aa).

Residues 1–22 are compositionally biased toward basic and acidic residues; sequence MELIKEETAPEDDSRGRQRDCR. Disordered stretches follow at residues 1–111, 157–223, 262–286, and 299–319; these read MELI…KKRR, LMEE…LQKD, NNWLRHVRRNPESPADGTGSQRVRE, and NELLLKTPASNEPGLNQSQPS. Positions 24–35 are enriched in polar residues; sequence SVVSSKQVQRNQ. Over residues 49–61 the composition is skewed to basic and acidic residues; that stretch reads PMCRDRSDPEPRT. The span at 97–111 shows a compositional bias: basic residues; it reads GKKKHRRRPSKKKRR. A compositionally biased stretch (acidic residues) spans 185 to 202; sequence TASEDENFEAEEDDEEEG. Gly residues predominate over residues 203–216; that stretch reads GGGSDGMGRPGQAG. The stretch at 240–306 forms a coiled coil; the sequence is SKQELVREYL…ENNELLLKTP (67 aa). Over residues 306–319 the composition is skewed to polar residues; sequence PASNEPGLNQSQPS.

It belongs to the HEXIM family. As to quaternary structure, homooligomer and heterooligomer. Core component of the 7SK RNP complex.

The protein localises to the nucleus. It is found in the cytoplasm. Transcriptional regulator which functions as a general RNA polymerase II transcription inhibitor. Core component of the 7SK RNP complex: in cooperation with 7SK snRNA sequesters P-TEFb in a large inactive 7SK snRNP complex preventing RNA polymerase II phosphorylation and subsequent transcriptional elongation. Plays a role in the regulation of DNA virus-mediated innate immune response by assembling into the HDP-RNP complex, a complex that serves as a platform for IRF3 phosphorylation and subsequent innate immune response activation through the cGAS-STING pathway. In Danio rerio (Zebrafish), this protein is Protein HEXIM1 (hexim1).